The sequence spans 561 residues: 2-succinyl-5-enolpyruvyl-6-hydroxy-3-cyclohexene-1-carboxylate synthase (561 aa).

Belongs to the TPP enzyme family. MenD subfamily. Homodimer. Mg(2+) serves as cofactor. The cofactor is Mn(2+). It depends on thiamine diphosphate as a cofactor.

The enzyme catalyses isochorismate + 2-oxoglutarate + H(+) = 5-enolpyruvoyl-6-hydroxy-2-succinyl-cyclohex-3-ene-1-carboxylate + CO2. It participates in quinol/quinone metabolism; 1,4-dihydroxy-2-naphthoate biosynthesis; 1,4-dihydroxy-2-naphthoate from chorismate: step 2/7. The protein operates within quinol/quinone metabolism; menaquinone biosynthesis. In terms of biological role, catalyzes the thiamine diphosphate-dependent decarboxylation of 2-oxoglutarate and the subsequent addition of the resulting succinic semialdehyde-thiamine pyrophosphate anion to isochorismate to yield 2-succinyl-5-enolpyruvyl-6-hydroxy-3-cyclohexene-1-carboxylate (SEPHCHC). The protein is 2-succinyl-5-enolpyruvyl-6-hydroxy-3-cyclohexene-1-carboxylate synthase of Proteus mirabilis (strain HI4320).